Reading from the N-terminus, the 922-residue chain is MASSGHSDLGEVTSEIKASERRTAVAIADLEWREMEGDDCEFHYGEGPNEAQDNDFPIEERSRLQEMLFLLGLETYQTQKLSLQDALQISSDSMKNWAPQTPKDLPWNFLRKLQALNAEARNTTMVLDLPLDTRPVEKESQMEEEIIYWDTAEDISADIYSFSELPTPDTPVNPLDLLCALLLSSDSFLQQEIVSKMSLCQFALPLILPDPENHYHTFLLWAMRGTVRTWGSQPPRVMGSFREDSMVLSRAPAFAFVRMEVSSNSKSQLLNDVLSPGHRQQDCFWHRDLNLGTNPREIADGLVEISWFLPSGREDLDIFPEPMAFLNLRGDIGSHWLQFKLLTEISSAIFILTDNISKKEYKLLSSMKGSATKYYFILSPYRGKRNTNLRFLNRLIPVLKMDHSHVLVKVSSTDSVGFVRRVRAIITHVTRSPCRRVSVEDMANAARKLGLKVDEDCEECQRAKDRMEQITRKIKDLDAYRRDELRLQGETWRKVAQVEKELCQIQWASDPPEKYRAELRHRLLELRMQQNDHDPSWGVQEFISGISSPSLGEKQYFLKWMEWGLARVAQPRPRPSPEMIFTLRPKHCGAVDFSEPFWPEPLGVEHFLREMGQFYEAESCLVEAGKLPAGQRRFAHFPGLALELLLKGLPLELIDGNTLSPALRWVTGLLKELHVRLERRSRLVVLSALGVPGTGKSTLLNTMFGLRFVTGRGRGPRGAFMQLIKVAESFSQDLGCDHILVIDSGGLIAGVRTEAGERFEREASLATLIMGLSNVTVVSLAETRNIPPAILHAFLRLEKTGHMPNYQFVHQNLHDVSALGSKPRDRRQLLDQPSDVGRATVQMEKQGDGIQTLADLAFWDPEKQHIWHIPGLWHGVPPMAAVNLAYSEAIFELKRCLLENIRNGLSNQNKNIQQLIELVRRL.

The disordered stretch occupies residues 1-20 (MASSGHSDLGEVTSEIKASE). S3 carries the phosphoserine modification. The VLIG-type G domain occupies 680–920 (RSRLVVLSAL…NIQQLIELVR (241 aa)).

This sequence belongs to the TRAFAC class dynamin-like GTPase superfamily. Very large inducible GTPase (VLIG) family.

It is found in the cytoplasm. Its subcellular location is the nucleus. Its function is as follows. May be involved in cell cycle progression through the regulation of cyclin D1 expression. This is Up-regulator of cell proliferation (URGCP) from Bos taurus (Bovine).